Here is a 232-residue protein sequence, read N- to C-terminus: MSSTPAAGSAAEVATSSATSNAPSAPSTTASNVSNTSQPTTAGTPQARGGRGSNANGGASGSNAGGGDEPRKEAKTTPRISRALGTSAKRIQKELAEITLDPPPNCSAGPKGDNLYEWVSTILGPPGSVYEGGVFFLDIHFSPEYPFKPPKVTFRTRIYHCNINSQGVICLDILKDNWSPALTISKVLLSICSLLTDCNPADPLVGSIATQYLQNREEHDRIARLWTKRYAT.

Residues 1-37 are compositionally biased toward low complexity; the sequence is MSSTPAAGSAAEVATSSATSNAPSAPSTTASNVSNTS. Residues 1–87 are disordered; that stretch reads MSSTPAAGSA…PRISRALGTS (87 aa). Over residues 58 to 67 the composition is skewed to gly residues; sequence GASGSNAGGG. Positions 86 to 232 constitute a UBC core domain; the sequence is TSAKRIQKEL…ARLWTKRYAT (147 aa). Cys170 (glycyl thioester intermediate) is an active-site residue.

Belongs to the ubiquitin-conjugating enzyme family.

The enzyme catalyses S-ubiquitinyl-[E1 ubiquitin-activating enzyme]-L-cysteine + [E2 ubiquitin-conjugating enzyme]-L-cysteine = [E1 ubiquitin-activating enzyme]-L-cysteine + S-ubiquitinyl-[E2 ubiquitin-conjugating enzyme]-L-cysteine.. Its pathway is protein modification; protein ubiquitination. Catalyzes the covalent attachment of ubiquitin to other proteins. This is Ubiquitin-conjugating enzyme E2-24 kDa from Drosophila melanogaster (Fruit fly).